The primary structure comprises 296 residues: NAD kinase (296 aa).

Aspartate 78 functions as the Proton acceptor in the catalytic mechanism. Residues 78-79 (DG), 152-153 (ND), arginine 180, aspartate 182, and glutamine 251 each bind NAD(+).

It belongs to the NAD kinase family. It depends on a divalent metal cation as a cofactor.

It is found in the cytoplasm. The enzyme catalyses NAD(+) + ATP = ADP + NADP(+) + H(+). Functionally, involved in the regulation of the intracellular balance of NAD and NADP, and is a key enzyme in the biosynthesis of NADP. Catalyzes specifically the phosphorylation on 2'-hydroxyl of the adenosine moiety of NAD to yield NADP. The polypeptide is NAD kinase (Neisseria meningitidis serogroup C (strain 053442)).